A 506-amino-acid chain; its full sequence is Protein spinster homolog 1 (506 aa).

The disordered stretch occupies residues 1-42 (MSQADADITPFFADDNEGEGPVENGVGSPLPEDEEEESPSGV). The segment covering 21–30 (PVENGVGSPL) has biased composition (low complexity). The next 12 membrane-spanning stretches (helical) occupy residues 52–71 (IVLCYINLLNYMDRFTVAGV), 87–107 (GLLQTVFICSYMFLAPLFGYL), 115–135 (LIMCVGIFFWSVVTLASSFIG), 149–169 (VGVGEASYSTIAPTIIADLFV), 176–196 (MLSIFYFAIPVGSGMGYIVGS), 207–227 (WALRVTPGLGLLAVFLLMLVV), 266–286 (FGFTAVAFVTGSLALWAPAFL), 310–330 (LIFGAITVVTGILGVASGVQA), 344–364 (LVCAAGLLLAAPFLYLSIMFA), 373–393 (VFIFLGETFLSMNWAIVADIL), 408–428 (FQIVLSHLLGDAISPYLIGVV), and 450–470 (LLCSFVAVAGGAFFLATAVFI).

Belongs to the major facilitator superfamily. Spinster (TC 2.A.1.49) family. As to expression, expressed in yolk cells.

It localises to the lysosome membrane. It catalyses the reaction a 1-acyl-sn-glycero-3-phosphocholine(out) + H(+)(out) = a 1-acyl-sn-glycero-3-phosphocholine(in) + H(+)(in). The enzyme catalyses a 1-acyl-sn-glycero-3-phosphoethanolamine(out) + H(+)(out) = a 1-acyl-sn-glycero-3-phosphoethanolamine(in) + H(+)(in). The catalysed reaction is a 1-O-(1Z-alkenyl)-sn-glycero-3-phosphocholine(out) + H(+)(out) = a 1-O-(1Z-alkenyl)-sn-glycero-3-phosphocholine(in) + H(+)(in). It carries out the reaction a 1-O-(1Z-alkenyl)-sn-glycero-3-phosphoethanolamine(out) + H(+)(out) = a 1-O-(1Z-alkenyl)-sn-glycero-3-phosphoethanolamine(in) + H(+)(in). Functionally, mediates the rate-limiting, proton-dependent, lysosomal efflux of lysophospholipids. Selective for zwitterionic headgroups such as lysophosphatidylcholine (LPC) and lysophosphatidylethanolamine (LPE). Essential player in lysosomal homeostasis. Critical for embryogenesis. Involved in the regulation of developmental senescence. The polypeptide is Protein spinster homolog 1 (spns1) (Danio rerio (Zebrafish)).